The following is a 57-amino-acid chain: uncharacterized protein (57 aa).

A disordered region spans residues 1 to 57 (MITPIGKNSNSNSNSNSNSNSNSNSNSNSNSNSNSNSNSNSNSNSNSNSNSNSNSNN). Residues 8–57 (NSNSNSNSNSNSNSNSNSNSNSNSNSNSNSNSNSNSNSNSNSNSNSNSNN) are compositionally biased toward low complexity.

This is an uncharacterized protein from Dictyostelium discoideum (Social amoeba).